The following is an 84-amino-acid chain: ORF8b protein (84 aa).

In terms of domain architecture, SARS ORF8 Ig-like spans 1-82 (MCLKILVRYN…RDVLVVLNKR (82 aa)). Cysteine 22 and cysteine 40 are joined by a disulfide.

The protein localises to the host cytoplasm. Its subcellular location is the host nucleus. Non-structural protein which is dispensable for virus replication in cell culture. The chain is ORF8b protein from Severe acute respiratory syndrome coronavirus (SARS-CoV).